Here is a 190-residue protein sequence, read N- to C-terminus: Protein GrpE (190 aa).

The span at 1-26 (MADKEKDAVIVDETEHVDVDSKESKK) shows a compositional bias: basic and acidic residues. The interval 1–31 (MADKEKDAVIVDETEHVDVDSKESKKEKKTK) is disordered.

The protein belongs to the GrpE family. Homodimer.

It localises to the cytoplasm. Participates actively in the response to hyperosmotic and heat shock by preventing the aggregation of stress-denatured proteins, in association with DnaK and GrpE. It is the nucleotide exchange factor for DnaK and may function as a thermosensor. Unfolded proteins bind initially to DnaJ; upon interaction with the DnaJ-bound protein, DnaK hydrolyzes its bound ATP, resulting in the formation of a stable complex. GrpE releases ADP from DnaK; ATP binding to DnaK triggers the release of the substrate protein, thus completing the reaction cycle. Several rounds of ATP-dependent interactions between DnaJ, DnaK and GrpE are required for fully efficient folding. The polypeptide is Protein GrpE (Acholeplasma laidlawii (strain PG-8A)).